Consider the following 278-residue polypeptide: 4-diphosphocytidyl-2-C-methyl-D-erythritol kinase (278 aa).

Residue K9 is part of the active site. 93-103 (PISAGLAGGSS) contacts ATP. Residue D135 is part of the active site.

It belongs to the GHMP kinase family. IspE subfamily.

The enzyme catalyses 4-CDP-2-C-methyl-D-erythritol + ATP = 4-CDP-2-C-methyl-D-erythritol 2-phosphate + ADP + H(+). It participates in isoprenoid biosynthesis; isopentenyl diphosphate biosynthesis via DXP pathway; isopentenyl diphosphate from 1-deoxy-D-xylulose 5-phosphate: step 3/6. In terms of biological role, catalyzes the phosphorylation of the position 2 hydroxy group of 4-diphosphocytidyl-2C-methyl-D-erythritol. This is 4-diphosphocytidyl-2-C-methyl-D-erythritol kinase from Finegoldia magna (strain ATCC 29328 / DSM 20472 / WAL 2508) (Peptostreptococcus magnus).